Reading from the N-terminus, the 332-residue chain is Transcription initiation factor IIB 2 (332 aa).

Residues 1–10 show a composition bias toward polar residues; the sequence is MSDTITTRTY. The tract at residues 1–36 is disordered; sequence MSDTITTRTYSADAKSRDVRPRESERDETQQDETQV. Positions 14 to 29 are enriched in basic and acidic residues; sequence AKSRDVRPRESERDET. The TFIIB-type zinc finger occupies 33–63; it reads ETQVCPECSGHLVTDEEHGETICEDCGLVVE. Residues Cys-37, Cys-40, Cys-55, and Cys-58 each coordinate Zn(2+). The tract at residues 77–106 is disordered; sequence DSAERDSKSRVGAPTTKMMHDKGLSTNIGW. 2 consecutive repeat copies span residues 149–232 and 243–324.

Belongs to the TFIIB family.

Stabilizes TBP binding to an archaeal box-A promoter. Also responsible for recruiting RNA polymerase II to the pre-initiation complex (DNA-TBP-TFIIB). The chain is Transcription initiation factor IIB 2 from Haloferax volcanii (strain ATCC 29605 / DSM 3757 / JCM 8879 / NBRC 14742 / NCIMB 2012 / VKM B-1768 / DS2) (Halobacterium volcanii).